The following is a 601-amino-acid chain: NADH-ubiquinone oxidoreductase chain 5 (601 aa).

Helical transmembrane passes span 3 to 23, 36 to 56, 84 to 104, 114 to 134, 140 to 160, 171 to 191, 201 to 221, 240 to 260, 272 to 292, 324 to 346, 365 to 385, 404 to 426, 456 to 476, 483 to 503, and 581 to 601; these read LIMP…MMSY, VTSS…MFLL, FFSI…MEFS, INQF…LVTA, LFIG…WWYG, AILY…WLLL, IFML…AAAG, TPVS…FLLV, ILTM…ICAL, AFLH…GSII, MPFT…MPFL, NAWA…TRLI, LALG…PLIT, LYMK…AMGL, and LIKL…MLII.

Belongs to the complex I subunit 5 family.

It localises to the mitochondrion inner membrane. The enzyme catalyses a ubiquinone + NADH + 5 H(+)(in) = a ubiquinol + NAD(+) + 4 H(+)(out). In terms of biological role, core subunit of the mitochondrial membrane respiratory chain NADH dehydrogenase (Complex I) that is believed to belong to the minimal assembly required for catalysis. Complex I functions in the transfer of electrons from NADH to the respiratory chain. The immediate electron acceptor for the enzyme is believed to be ubiquinone. The protein is NADH-ubiquinone oxidoreductase chain 5 (MT-ND5) of Dasypus novemcinctus (Nine-banded armadillo).